A 411-amino-acid polypeptide reads, in one-letter code: Adenylosuccinate synthetase (411 aa).

Residues 11–17 (GDEGKGK) and 39–41 (GHT) contribute to the GTP site. Residue Asp12 is the Proton acceptor of the active site. Mg(2+)-binding residues include Asp12 and Gly39. Residues 12 to 15 (DEGK), 37 to 40 (NAGH), Thr121, Arg135, Gln215, Thr230, and Arg294 each bind IMP. The active-site Proton donor is the His40. Substrate is bound at residue 290 to 296 (TTTKRPR). GTP is bound by residues Arg296, 322–324 (KLD), and 400–402 (STS).

Belongs to the adenylosuccinate synthetase family. As to quaternary structure, homodimer. Mg(2+) serves as cofactor.

Its subcellular location is the cytoplasm. The enzyme catalyses IMP + L-aspartate + GTP = N(6)-(1,2-dicarboxyethyl)-AMP + GDP + phosphate + 2 H(+). The protein operates within purine metabolism; AMP biosynthesis via de novo pathway; AMP from IMP: step 1/2. In terms of biological role, plays an important role in the de novo pathway of purine nucleotide biosynthesis. Catalyzes the first committed step in the biosynthesis of AMP from IMP. The protein is Adenylosuccinate synthetase of Helicobacter pylori (strain J99 / ATCC 700824) (Campylobacter pylori J99).